Here is a 67-residue protein sequence, read N- to C-terminus: Conotoxin LiC33 (67 aa).

A signal peptide spans 1-22; it reads MRCVPVFIILLLLSPSAPSVDA. A propeptide spanning residues 23–48 is cleaved from the precursor; that stretch reads HPKTKDDVPLASFHDDAKRTLQRLWI. Phenylalanine amide is present on phenylalanine 63. Positions 65 to 67 are excised as a propeptide; it reads KGK.

This sequence belongs to the conotoxin T superfamily. In terms of processing, contains 2 disulfide bonds that can be either 'C1-C3, C2-C4' or 'C1-C4, C2-C3', since these disulfide connectivities have been observed for conotoxins with cysteine framework V (for examples, see AC P0DQQ7 and AC P81755). In terms of tissue distribution, expressed by the venom duct.

Its subcellular location is the secreted. This chain is Conotoxin LiC33, found in Conus lividus (Livid cone).